The following is an 882-amino-acid chain: Translation initiation factor IF-2 (882 aa).

A disordered region spans residues 28–296; sequence GIRKSADDSV…LQQGFQKPAQ (269 aa). A compositionally biased stretch (polar residues) spans 67–81; that stretch reads STLNIPGTGGKSKSV. Basic and acidic residues predominate over residues 92 to 209; it reads VKRDPQEAER…RMAEENKWTD (118 aa). Positions 244–258 are enriched in basic residues; it reads GRGRNAKAARPKKGN. The span at 259–272 shows a compositional bias: basic and acidic residues; it reads KHAESKADREEARA. The 170-residue stretch at 381-550 folds into the tr-type G domain; it reads PRAPVVTIMG…LLQAEVLELK (170 aa). Positions 390-397 are G1; the sequence is GHVDHGKT. 390–397 is a binding site for GTP; that stretch reads GHVDHGKT. Residues 415–419 form a G2 region; that stretch reads GITQH. Residues 436-439 form a G3 region; it reads DTPG. GTP contacts are provided by residues 436-440 and 490-493; these read DTPGH and NKID. Positions 490-493 are G4; the sequence is NKID. Residues 526–528 form a G5 region; that stretch reads SAK. At Lys800 the chain carries N6-acetyllysine.

It belongs to the TRAFAC class translation factor GTPase superfamily. Classic translation factor GTPase family. IF-2 subfamily.

Its subcellular location is the cytoplasm. In terms of biological role, one of the essential components for the initiation of protein synthesis. Protects formylmethionyl-tRNA from spontaneous hydrolysis and promotes its binding to the 30S ribosomal subunits. Also involved in the hydrolysis of GTP during the formation of the 70S ribosomal complex. In Shigella boydii serotype 4 (strain Sb227), this protein is Translation initiation factor IF-2.